The following is a 1177-amino-acid chain: Zinc finger CCCH domain-containing protein 6 (1177 aa).

The span at 1–12 (MTDSEHAGHDRE) shows a compositional bias: basic and acidic residues. Disordered regions lie at residues 1–137 (MTDS…SKEY) and 179–206 (QESS…TEYR). The span at 13-31 (DGELEDGEIDDAGFEETQD) shows a compositional bias: acidic residues. Residues 27-73 (EETQDQEAKENEKQKNEKAYRKSRKKHKKEREKKKSKRRKHEKHKHN) adopt a coiled-coil conformation. The span at 32-46 (QEAKENEKQKNEKAY) shows a compositional bias: basic and acidic residues. Basic residues predominate over residues 47–73 (RKSRKKHKKEREKKKSKRRKHEKHKHN). Low complexity predominate over residues 179–188 (QESSGSSFSK). C3H1-type zinc fingers lie at residues 271–297 (KGKQ…HDAE), 299–326 (EKKK…HSEF), and 327–350 (PCKF…HDDL). Positions 347–383 (HDDLTKETRKLLDKVLNADEELVNEDERELEELRKRG) form a coiled coil. Disordered stretches follow at residues 383-416 (GITP…FETD), 446-587 (PPAF…ESMQ), 622-654 (QQQP…SASG), 670-767 (RYQE…KKPH), 780-826 (PKKL…SERE), 942-988 (EQSG…SSRS), 1043-1101 (DPRD…PVDG), and 1132-1162 (LLRP…DKPL). Low complexity predominate over residues 493 to 502 (HPGSPGHHPC). 2 stretches are compositionally biased toward polar residues: residues 512–522 (ENPSLLPSSSE) and 564–587 (SSPA…ESMQ). A compositionally biased stretch (polar residues) spans 713–728 (RTLQKQTGTLRNQQLP). Residues 753 to 767 (PRLRTVPRQDIKKPH) show a composition bias toward basic and acidic residues. Positions 955-967 (GDPRLQKNFDPRL) are enriched in basic and acidic residues. 2 stretches are compositionally biased toward polar residues: residues 1050–1064 (LSAT…GENT) and 1077–1093 (KNQP…NTTA). Ser1150 bears the Phosphoserine mark.

This Mus musculus (Mouse) protein is Zinc finger CCCH domain-containing protein 6 (Zc3h6).